A 559-amino-acid polypeptide reads, in one-letter code: Fanconi-associated nuclease 1 homolog (559 aa).

Residues Glu-386, Asp-507, Glu-522, and Val-523 each coordinate Mn(2+). The VRR-NUC domain occupies 443–555; that stretch reads DGSYRDAIRC…MPVAVCYVRW (113 aa).

It belongs to the FAN1 family. Mn(2+) serves as cofactor. Requires Mg(2+) as cofactor.

The catalysed reaction is Hydrolytically removes 5'-nucleotides successively from the 3'-hydroxy termini of 3'-hydroxy-terminated oligonucleotides.. In terms of biological role, nuclease required for the repair of DNA interstrand cross-links (ICL). Acts as a 5'-3' exonuclease that anchors at a cut end of DNA and cleaves DNA successively at every third nucleotide, allowing to excise an ICL from one strand through flanking incisions. Also has endonuclease activity toward 5'-flaps. The chain is Fanconi-associated nuclease 1 homolog from Pseudomonas aeruginosa (strain ATCC 15692 / DSM 22644 / CIP 104116 / JCM 14847 / LMG 12228 / 1C / PRS 101 / PAO1).